Consider the following 205-residue polypeptide: Anaerobic dimethyl sulfoxide reductase chain B (205 aa).

4Fe-4S ferredoxin-type domains follow at residues 4 to 32 (YGFY…LGTE), 57 to 89 (NIFA…KNAD), and 90 to 119 (GFVI…YDAQ). Residues cysteine 13, cysteine 16, cysteine 19, cysteine 23, cysteine 67, cysteine 70, cysteine 75, cysteine 79, cysteine 99, cysteine 102, cysteine 105, cysteine 109, cysteine 126, cysteine 129, cysteine 141, and cysteine 145 each contribute to the [4Fe-4S] cluster site.

In terms of assembly, heterotrimeric enzyme composed of a catalytic heterodimer (DmsAB) and a membrane anchor protein (DmsC). Requires [4Fe-4S] cluster as cofactor.

Functionally, electron transfer subunit of the terminal reductase during anaerobic growth on various sulfoxide and N-oxide compounds. The sequence is that of Anaerobic dimethyl sulfoxide reductase chain B (dmsB) from Haemophilus influenzae (strain ATCC 51907 / DSM 11121 / KW20 / Rd).